We begin with the raw amino-acid sequence, 219 residues long: 7-cyano-7-deazaguanine synthase (219 aa).

Residue 10–20 participates in ATP binding; the sequence is FSGGQDSTTCL. Residues Cys-188, Cys-197, Cys-200, and Cys-203 each contribute to the Zn(2+) site.

This sequence belongs to the QueC family. In terms of assembly, homodimer. Requires Zn(2+) as cofactor.

It catalyses the reaction 7-carboxy-7-deazaguanine + NH4(+) + ATP = 7-cyano-7-deazaguanine + ADP + phosphate + H2O + H(+). The protein operates within purine metabolism; 7-cyano-7-deazaguanine biosynthesis. Functionally, catalyzes the ATP-dependent conversion of 7-carboxy-7-deazaguanine (CDG) to 7-cyano-7-deazaguanine (preQ(0)). The sequence is that of 7-cyano-7-deazaguanine synthase from Clostridium botulinum (strain Kyoto / Type A2).